Reading from the N-terminus, the 149-residue chain is Calmodulin (149 aa).

T2 bears the N-acetylthreonine mark. 4 EF-hand domains span residues 8–43 (EQIA…LGQN), 44–79 (PTEA…KMKE), 81–116 (DSEE…LGEK), and 117–149 (LTDE…MTSK). 14 residues coordinate Ca(2+): D21, D23, D25, T27, E32, D57, D59, N61, T63, E68, D94, D96, N98, and E105. N6,N6,N6-trimethyllysine is present on K116. D130, D132, D134, Q136, and E141 together coordinate Ca(2+).

This sequence belongs to the calmodulin family.

In terms of biological role, calmodulin mediates the control of a large number of enzymes, ion channels and other proteins by Ca(2+). Among the enzymes to be stimulated by the calmodulin-Ca(2+) complex are a number of protein kinases and phosphatases. The sequence is that of Calmodulin from Halichondria okadai (Marine sponge).